A 223-amino-acid chain; its full sequence is Holliday junction branch migration complex subunit RuvA (223 aa).

The segment at 1-64 (MIGRIAGVIL…EDLLQLFGFP (64 aa)) is domain I. Positions 65–143 (TLLEKEWHRL…AVMALGGALT (79 aa)) are domain II. A flexible linker region spans residues 144–169 (VDPGPLPEVELVEAAVPAPVPAKAAP). The domain III stretch occupies residues 170–223 (SSAQATADALSALGNLGYAPSEAASAVAEAAAREPAAPTAALIRAALRLLAPKE).

The protein belongs to the RuvA family. In terms of assembly, homotetramer. Forms an RuvA(8)-RuvB(12)-Holliday junction (HJ) complex. HJ DNA is sandwiched between 2 RuvA tetramers; dsDNA enters through RuvA and exits via RuvB. An RuvB hexamer assembles on each DNA strand where it exits the tetramer. Each RuvB hexamer is contacted by two RuvA subunits (via domain III) on 2 adjacent RuvB subunits; this complex drives branch migration. In the full resolvosome a probable DNA-RuvA(4)-RuvB(12)-RuvC(2) complex forms which resolves the HJ.

The protein localises to the cytoplasm. In terms of biological role, the RuvA-RuvB-RuvC complex processes Holliday junction (HJ) DNA during genetic recombination and DNA repair, while the RuvA-RuvB complex plays an important role in the rescue of blocked DNA replication forks via replication fork reversal (RFR). RuvA specifically binds to HJ cruciform DNA, conferring on it an open structure. The RuvB hexamer acts as an ATP-dependent pump, pulling dsDNA into and through the RuvAB complex. HJ branch migration allows RuvC to scan DNA until it finds its consensus sequence, where it cleaves and resolves the cruciform DNA. The sequence is that of Holliday junction branch migration complex subunit RuvA from Paracoccus denitrificans (strain Pd 1222).